The sequence spans 116 residues: uncharacterized protein (116 aa).

This is an uncharacterized protein from Aquifex aeolicus (strain VF5).